Consider the following 432-residue polypeptide: Asparagine--tRNA ligase (432 aa).

The protein belongs to the class-II aminoacyl-tRNA synthetase family. As to quaternary structure, homodimer.

The protein resides in the cytoplasm. The enzyme catalyses tRNA(Asn) + L-asparagine + ATP = L-asparaginyl-tRNA(Asn) + AMP + diphosphate + H(+). The protein is Asparagine--tRNA ligase of Lactobacillus johnsonii (strain CNCM I-12250 / La1 / NCC 533).